A 231-amino-acid polypeptide reads, in one-letter code: tRNA (guanine-N(7)-)-methyltransferase (231 aa).

S-adenosyl-L-methionine is bound by residues glutamate 62, glutamate 87, aspartate 114, and aspartate 137. Aspartate 137 is a catalytic residue. Residues lysine 141, aspartate 173, and 210–213 (TKFE) contribute to the substrate site.

Belongs to the class I-like SAM-binding methyltransferase superfamily. TrmB family.

It catalyses the reaction guanosine(46) in tRNA + S-adenosyl-L-methionine = N(7)-methylguanosine(46) in tRNA + S-adenosyl-L-homocysteine. The protein operates within tRNA modification; N(7)-methylguanine-tRNA biosynthesis. In terms of biological role, catalyzes the formation of N(7)-methylguanine at position 46 (m7G46) in tRNA. The chain is tRNA (guanine-N(7)-)-methyltransferase from Methylococcus capsulatus (strain ATCC 33009 / NCIMB 11132 / Bath).